The following is a 235-amino-acid chain: Voltage-gated hydrogen channel 1 (235 aa).

Residues 1 to 62 (MSRYLKHFTV…VMKKLFSSRR (62 aa)) lie on the Cytoplasmic side of the membrane. The helical transmembrane segment at 63-83 (FQIVIVFLVIVDALLVLGELL) threads the bilayer. Over 84 to 100 (MDLKIIHPDKYHIAPKV) the chain is Extracellular. Residues 101-123 (FHYLSLSILTIFLVEVGFKIFVY) form a helical membrane-spanning segment. Topologically, residues 124 to 131 (GREFFHHK) are cytoplasmic. The helical transmembrane segment at 132 to 152 (FEVLDSIVVVVSFILDLVLLF) threads the bilayer. The Extracellular segment spans residues 153–159 (REHEFEA). A helical membrane pass occupies residues 160 to 180 (VGLLILLRLWRVARIINGIIL). The Cytoplasmic segment spans residues 181–235 (SVKTRSEQQVSKLKQVNLKLATKVEQLQHSCVEKEQEIERLTRMLKQHGLLSEQT). A coiled-coil region spans residues 187–228 (EQQVSKLKQVNLKLATKVEQLQHSCVEKEQEIERLTRMLKQH).

It belongs to the hydrogen channel family. In terms of assembly, homodimer.

It is found in the membrane. The protein localises to the cell membrane. Mediates the voltage-dependent proton permeability of excitable membranes. Forms a proton-selective channel through which protons may pass in accordance with their electrochemical gradient. The sequence is that of Voltage-gated hydrogen channel 1 (HVCN1) from Gallus gallus (Chicken).